The chain runs to 436 residues: 4-hydroxyphenylpyruvate dioxygenase (436 aa).

VOC domains lie at R38–V194 and R210–K370. Positions 213, 295, and 381 each coordinate Fe cation.

Belongs to the 4HPPD family. It depends on Fe cation as a cofactor.

Its subcellular location is the cytoplasm. It carries out the reaction 3-(4-hydroxyphenyl)pyruvate + O2 = homogentisate + CO2. It participates in amino-acid degradation; L-phenylalanine degradation; acetoacetate and fumarate from L-phenylalanine: step 3/6. It functions in the pathway cofactor biosynthesis; prenylquinone biosynthesis. The polypeptide is 4-hydroxyphenylpyruvate dioxygenase (Plectranthus scutellarioides (Coleus)).